The chain runs to 637 residues: MLNITLPDGSVRQYESPVTVAQIAASIGAGLAKAAVAGKVNGKLVDACDPITEDSSVQIITPKDQEGIEIIRHSCAHLVGHAVKQLYPNAKMVIGPVIEEGFYYDIATEKPFTPEDVAAIEARMKELIAQDYDVVKIMTPRAEAIKIFQERGEEYKLRLIDDMPEVEAMGMYHHQEYVDMCRGPHVPNTRFLKNFKLTKLAGAYWRGDSNNEMLQRIYGTAWATKDELKAYIQRIEEAEKRDHRKLGKQLDLFHLQDEAPGMVFWHPKGWALWQVIEQHMRKELNAAGYKEVKTPQIMDKTFWEKSGHWDNYKDNMFVTSSEKREYAVKPMNCPGHVQIFNNGLRSYRDLPMRLAEFGSCHRNEPSGALHGLMRVRGFVQDDAHIFCTEDQIVSEARAFNELLVRIYKQFGFHDVSVKLSLRPEKRAGSDDVWDKAEQGLREALTACGVEWGELPGEGAFYGPKIEYHVRDALGRSWQCGTLQLDFVLPERLGAEYVTENNDRARPVMLHRAILGSLERFIGILIENHAGSFPLWLAPVQLVIMNITENQADYCREVAAKLQAAGFRAELDLRNEKIGYKIRDNSQYRFPYQIVVGDKEKQENKVAVRRKAEDLGSLDLDDFIAQLQQEITDALVNH.

Residues 1–61 (MLNITLPDGS…TEDSSVQIIT (61 aa)) form the TGS domain. Residues 242–533 (DHRKLGKQLD…LIENHAGSFP (292 aa)) are catalytic. Residues Cys-333, His-384, and His-510 each coordinate Zn(2+).

The protein belongs to the class-II aminoacyl-tRNA synthetase family. Homodimer. It depends on Zn(2+) as a cofactor.

It is found in the cytoplasm. It carries out the reaction tRNA(Thr) + L-threonine + ATP = L-threonyl-tRNA(Thr) + AMP + diphosphate + H(+). Functionally, catalyzes the attachment of threonine to tRNA(Thr) in a two-step reaction: L-threonine is first activated by ATP to form Thr-AMP and then transferred to the acceptor end of tRNA(Thr). Also edits incorrectly charged L-seryl-tRNA(Thr). This Neisseria meningitidis serogroup C (strain 053442) protein is Threonine--tRNA ligase.